Reading from the N-terminus, the 152-residue chain is Protein ripply3 (152 aa).

Over residues 1–24 the composition is skewed to basic and acidic residues; it reads MRPEAAGVREARGRLCHCPGDDPG. Disordered stretches follow at residues 1–76 and 113–152; these read MRPE…GAFG and FYND…ERAE. Positions 40 to 43 match the WRPW motif motif; sequence WRPW. The ripply homology domain stretch occupies residues 79–114; that stretch reads HPVRLYLPVSKRQEYLQSSGEKVLASFPVQATIHFY. Residues 116–130 show a composition bias toward acidic residues; that stretch reads DDSESGSEEEQEEEA. The segment covering 140–152 has biased composition (basic and acidic residues); the sequence is AEVRDSAQEERAE.

This sequence belongs to the ripply family. In terms of assembly, interacts with TBX1.

The protein resides in the nucleus. Its function is as follows. Acts as a transcriptional corepressor. Negative regulator of the transcriptional activity of TBX1. Plays a role in the development of the pharyngeal apparatus and derivatives. This chain is Protein ripply3 (Ripply3), found in Mus musculus (Mouse).